Reading from the N-terminus, the 144-residue chain is ATP synthase epsilon chain (144 aa).

The protein belongs to the ATPase epsilon chain family. In terms of assembly, F-type ATPases have 2 components, CF(1) - the catalytic core - and CF(0) - the membrane proton channel. CF(1) has five subunits: alpha(3), beta(3), gamma(1), delta(1), epsilon(1). CF(0) has three main subunits: a, b and c.

It is found in the cell inner membrane. In terms of biological role, produces ATP from ADP in the presence of a proton gradient across the membrane. This is ATP synthase epsilon chain from Hydrogenovibrio crunogenus (strain DSM 25203 / XCL-2) (Thiomicrospira crunogena).